Consider the following 148-residue polypeptide: D-aminoacyl-tRNA deacylase (148 aa).

A Gly-cisPro motif, important for rejection of L-amino acids motif is present at residues Gly137–Pro138.

It belongs to the DTD family. In terms of assembly, homodimer.

The protein localises to the cytoplasm. The catalysed reaction is glycyl-tRNA(Ala) + H2O = tRNA(Ala) + glycine + H(+). The enzyme catalyses a D-aminoacyl-tRNA + H2O = a tRNA + a D-alpha-amino acid + H(+). An aminoacyl-tRNA editing enzyme that deacylates mischarged D-aminoacyl-tRNAs. Also deacylates mischarged glycyl-tRNA(Ala), protecting cells against glycine mischarging by AlaRS. Acts via tRNA-based rather than protein-based catalysis; rejects L-amino acids rather than detecting D-amino acids in the active site. By recycling D-aminoacyl-tRNA to D-amino acids and free tRNA molecules, this enzyme counteracts the toxicity associated with the formation of D-aminoacyl-tRNA entities in vivo and helps enforce protein L-homochirality. The polypeptide is D-aminoacyl-tRNA deacylase (Ligilactobacillus salivarius (strain UCC118) (Lactobacillus salivarius)).